A 129-amino-acid polypeptide reads, in one-letter code: uncharacterized protein (129 aa).

This sequence to M.pneumoniae MPN_376 N-terminal region.

This is an uncharacterized protein from Mycoplasma pneumoniae (strain ATCC 29342 / M129 / Subtype 1) (Mycoplasmoides pneumoniae).